Here is a 1165-residue protein sequence, read N- to C-terminus: ATP-dependent helicase/deoxyribonuclease subunit B (1165 aa).

Residues 1 to 324 (MRFIIGGAGS…LVEAQNRREE (324 aa)) enclose the UvrD-like helicase ATP-binding domain. 6–13 (GGAGSGKS) serves as a coordination point for ATP. One can recognise a UvrD-like helicase C-terminal domain in the interval 282 to 597 (PLRFRGAPEL…IVGTVERSRH (316 aa)). [4Fe-4S] cluster contacts are provided by Cys803, Cys1121, Cys1124, and Cys1130.

Belongs to the helicase family. AddB/RexB type 1 subfamily. As to quaternary structure, heterodimer of AddA and AddB. It depends on Mg(2+) as a cofactor. [4Fe-4S] cluster is required as a cofactor.

In terms of biological role, the heterodimer acts as both an ATP-dependent DNA helicase and an ATP-dependent, dual-direction single-stranded exonuclease. Recognizes the chi site generating a DNA molecule suitable for the initiation of homologous recombination. The AddB subunit has 5' -&gt; 3' nuclease activity but not helicase activity. This Symbiobacterium thermophilum (strain DSM 24528 / JCM 14929 / IAM 14863 / T) protein is ATP-dependent helicase/deoxyribonuclease subunit B.